Consider the following 162-residue polypeptide: MTIDDDLSRIAEQEKVLSFDAFDLTTAWQLGKLLQELATERGLGIAIDVTLHSMPVFYAALPGVTPDNVNWVRRKRNMVLRYFRSSYASGLKLQKDGKTVEDNGLSGADYAPHGGSFPINVKGSGCIGAVTVSGLPQRDDHNLAVEALALMLAKDLDTLRLA.

Belongs to the UPF0303 family.

This Rhizobium johnstonii (strain DSM 114642 / LMG 32736 / 3841) (Rhizobium leguminosarum bv. viciae) protein is UPF0303 protein RL3365.